Reading from the N-terminus, the 174-residue chain is ATP-dependent protease subunit HslV (174 aa).

Residue threonine 2 is part of the active site. Na(+) contacts are provided by glycine 157, cysteine 160, and threonine 163.

The protein belongs to the peptidase T1B family. HslV subfamily. As to quaternary structure, a double ring-shaped homohexamer of HslV is capped on each side by a ring-shaped HslU homohexamer. The assembly of the HslU/HslV complex is dependent on binding of ATP.

The protein localises to the cytoplasm. It carries out the reaction ATP-dependent cleavage of peptide bonds with broad specificity.. With respect to regulation, allosterically activated by HslU binding. Its function is as follows. Protease subunit of a proteasome-like degradation complex believed to be a general protein degrading machinery. This is ATP-dependent protease subunit HslV from Shewanella frigidimarina (strain NCIMB 400).